Consider the following 445-residue polypeptide: Trigger factor (445 aa).

Residues 166-251 (GDVVVVDFVG…AKALKRPVDV (86 aa)) enclose the PPIase FKBP-type domain.

Belongs to the FKBP-type PPIase family. Tig subfamily.

The protein resides in the cytoplasm. It carries out the reaction [protein]-peptidylproline (omega=180) = [protein]-peptidylproline (omega=0). Functionally, involved in protein export. Acts as a chaperone by maintaining the newly synthesized protein in an open conformation. Functions as a peptidyl-prolyl cis-trans isomerase. In Gluconacetobacter diazotrophicus (strain ATCC 49037 / DSM 5601 / CCUG 37298 / CIP 103539 / LMG 7603 / PAl5), this protein is Trigger factor.